A 670-amino-acid chain; its full sequence is uncharacterized protein (670 aa).

Residues Pro-53 to Pro-83 form a disordered region. 27 consecutive repeat copies span residues Ala-143 to Thr-158, Ala-171 to Thr-186, Ala-200 to Pro-214, Ala-215 to Pro-233, Ala-234 to Pro-252, Ala-253 to Thr-268, Thr-279 to Pro-293, Ala-294 to Thr-309, Thr-320 to Pro-334, Ala-335 to Pro-349, Ala-362 to Pro-376, Ala-377 to Pro-391, Ala-392 to Pro-406, Ala-407 to Pro-421, Ala-422 to Pro-436, Ala-437 to Thr-452, Val-464 to Thr-477, Ala-478 to Thr-493, Ala-504 to Thr-517, Ala-518 to Thr-531, Ala-532 to Thr-545, Ala-546 to Thr-559, Ala-560 to Thr-573, Ala-574 to Thr-587, Ala-588 to Thr-601, Ala-602 to Thr-615, and Ala-616 to Thr-629. The tract at residues Pro-187 to Asn-225 is disordered. Over residues Ala-205–Asn-225 the composition is skewed to low complexity. A disordered region spans residues Gly-339–Thr-395. A compositionally biased stretch (polar residues) spans Asp-342 to Ala-362. A compositionally biased stretch (low complexity) spans Met-363–Thr-395. 2 stretches are compositionally biased toward low complexity: residues Gly-471–Gly-482 and Thr-490–Thr-503. A disordered region spans residues Gly-471–Thr-503. Over residues Gly-525–Gly-634 the composition is skewed to low complexity. Residues Gly-525–Arg-670 are disordered. Over residues Gly-638–Gly-654 the composition is skewed to basic residues.

This is an uncharacterized protein from Ictalurid herpesvirus 1 (strain Auburn) (IcHV-1).